A 950-amino-acid chain; its full sequence is Translation initiation factor IF-2 (950 aa).

Disordered stretches follow at residues 69–92 (KTKTVPETAKSKQEDHPRTFAGKA) and 128–352 (KPKV…SNVP). 5 stretches are compositionally biased toward basic and acidic residues: residues 77 to 86 (AKSKQEDHPR), 128 to 158 (KPKVAEPVKKSEPKAAAKAEETKVEKVEAKA), 165 to 186 (AEVKTENVADKKEPVVTEEKKK), 200 to 234 (KRAEDIKKEQAAARPEKKKFDKNRNDRNNRNDNRR), and 291 to 312 (NRRDRDRKKTDSNRDNTKDGNR). Polar residues-rich tracts occupy residues 322–336 (NRNQVRNARNSNWNQ) and 343–352 (YQNNQSSNVP). A tr-type G domain is found at 448–619 (ERPAVVTIMG…LLVAEVQELK (172 aa)). The tract at residues 457–464 (GHVDHGKT) is G1. 457 to 464 (GHVDHGKT) contributes to the GTP binding site. The segment at 482-486 (GITQH) is G2. A G3 region spans residues 503–506 (DTPG). GTP is bound by residues 503–507 (DTPGH) and 557–560 (NKID). Residues 557 to 560 (NKID) are G4. The interval 595-597 (SAK) is G5.

Belongs to the TRAFAC class translation factor GTPase superfamily. Classic translation factor GTPase family. IF-2 subfamily.

It is found in the cytoplasm. Functionally, one of the essential components for the initiation of protein synthesis. Protects formylmethionyl-tRNA from spontaneous hydrolysis and promotes its binding to the 30S ribosomal subunits. Also involved in the hydrolysis of GTP during the formation of the 70S ribosomal complex. This chain is Translation initiation factor IF-2, found in Lactococcus lactis subsp. cremoris (strain SK11).